A 579-amino-acid polypeptide reads, in one-letter code: Chromosomal replication initiator protein DnaA (579 aa).

The tract at residues 1 to 71 (MQDFWQAAAA…TALACEYWET (71 aa)) is domain I, interacts with DnaA modulators. Positions 71–242 (TQVSVHFVLD…QQSDTVHERS (172 aa)) are domain II. Disordered stretches follow at residues 131-196 (AGAQ…SAAH) and 212-240 (EASA…TVHE). Residues 171-183 (SQSQQSAQGRGAA) are compositionally biased toward low complexity. The domain III, AAA+ region stretch occupies residues 243-459 (RLNPILTFDN…GALRKILAFS (217 aa)). Gly-287, Gly-289, Lys-290, and Thr-291 together coordinate ATP. Positions 460–579 (NFHGKDITID…LHVLEQTLKG (120 aa)) are domain IV, binds dsDNA.

It belongs to the DnaA family. As to quaternary structure, oligomerizes as a right-handed, spiral filament on DNA at oriC.

The protein resides in the cytoplasm. In terms of biological role, plays an essential role in the initiation and regulation of chromosomal replication. ATP-DnaA binds to the origin of replication (oriC) to initiate formation of the DNA replication initiation complex once per cell cycle. Binds the DnaA box (a 9 base pair repeat at the origin) and separates the double-stranded (ds)DNA. Forms a right-handed helical filament on oriC DNA; dsDNA binds to the exterior of the filament while single-stranded (ss)DNA is stabiized in the filament's interior. The ATP-DnaA-oriC complex binds and stabilizes one strand of the AT-rich DNA unwinding element (DUE), permitting loading of DNA polymerase. After initiation quickly degrades to an ADP-DnaA complex that is not apt for DNA replication. Binds acidic phospholipids. This Cupriavidus metallidurans (strain ATCC 43123 / DSM 2839 / NBRC 102507 / CH34) (Ralstonia metallidurans) protein is Chromosomal replication initiator protein DnaA.